The sequence spans 382 residues: Gap junction alpha-1 protein (382 aa).

At 2–23 the chain is on the cytoplasmic side; that stretch reads GGWSALAKLLGKVQAYSPAGGK. Serine 5 is modified (phosphoserine). A helical membrane pass occupies residues 24–44; sequence VWLSVLFIFRILLLGTAVESA. The Extracellular segment spans residues 45–76; that stretch reads WGDEQSAFRCNTQQPGCENVCYDKSFPISHVR. 2 disulfides stabilise this stretch: cysteine 54/cysteine 192 and cysteine 187/cysteine 198. The helical transmembrane segment at 77-97 threads the bilayer; the sequence is FWVLQIIFVSVPTLLYLAHVF. Residues 98–155 are Cytoplasmic-facing; that stretch reads YVMRKEEKLNKKEEELKVAQTDGANVDMHLKQIEIKKFKYGIEEHGKVKMRGGLLRTY. Residue lysine 144 forms a Glycyl lysine isopeptide (Lys-Gly) (interchain with G-Cter in SUMO) linkage. Residues 156–176 form a helical membrane-spanning segment; the sequence is IISILFKSVFEVAFLLIQWYI. Residues 177 to 207 lie on the Extracellular side of the membrane; the sequence is YGFSLSAVYTCKREPCPHQVDCFLSRPTEKT. The helical transmembrane segment at 208–228 threads the bilayer; that stretch reads IFIIFMLVVSLVSLALNIIEL. Topologically, residues 229-382 are cytoplasmic; it reads FYVFFKGVKD…SRPRPDDLEI (154 aa). Lysine 237 participates in a covalent cross-link: Glycyl lysine isopeptide (Lys-Gly) (interchain with G-Cter in SUMO). The segment at 244 to 382 is interaction with NOV; the sequence is SDPYHATTGP…SRPRPDDLEI (139 aa). At tyrosine 247 the chain carries Phosphotyrosine. Residues serine 255, serine 257, and serine 262 each carry the phosphoserine modification. The interval 264–382 is interaction with UBQLN4; that stretch reads EYAYFNGCSS…SRPRPDDLEI (119 aa). The residue at position 271 (cysteine 271) is an S-nitrosocysteine. Residue threonine 275 is modified to Phosphothreonine. Serine 306 and serine 314 each carry phosphoserine. Residues 317 to 332 are compositionally biased toward polar residues; it reads QNRMGQAGSTISNSHA. The interval 317-382 is disordered; it reads QNRMGQAGST…SRPRPDDLEI (66 aa). The residue at position 325 (serine 325) is a Phosphoserine; by CK1. A Phosphothreonine modification is found at threonine 326. Phosphoserine; by CK1 occurs at positions 328 and 330. Residues serine 344 and serine 365 each carry the phosphoserine modification. The segment covering 362-374 has biased composition (low complexity); it reads RPSSRASSRASSR. Serine 368 is subject to Phosphoserine; by PKC/PRKCG and PKC/PRKCD. Phosphoserine occurs at positions 369 and 373.

It belongs to the connexin family. Alpha-type (group II) subfamily. In terms of assembly, a connexon is composed of a hexamer of connexins. Interacts with SGSM3. Interacts with RIC1/CIP150. Interacts with CNST and CSNK1D. Interacts (via C-terminus) with TJP1. Interacts (via C-terminus) with SRC (via SH3 domain). Interacts (not ubiquitinated) with UBQLN4 (via UBA domain). Interacts with NOV. Interacts with TMEM65. Interacts with ANK3/ANKG and PKP2. Phosphorylation at Ser-325, Ser-328 and Ser-330 by CK1 modulates gap junction assembly. Phosphorylated at Ser-368 by PRKCG; phosphorylation induces disassembly of gap junction plaques and inhibition of gap junction activity. Phosphorylation at Ser-368 by PRKCD triggers its internalization into small vesicles leading to proteasome-mediated degradation. Post-translationally, sumoylated with SUMO1, SUMO2 and SUMO3, which may regulate the level of functional Cx43 gap junctions at the plasma membrane. May be desumoylated by SENP1 or SENP2. In terms of processing, S-nitrosylation at Cys-271 is enriched at the muscle endothelial gap junction in arteries, it augments channel permeability and may regulate of smooth muscle cell to endothelial cell communication. Acetylated in the developing cortex; leading to delocalization from the cell membrane.

The protein localises to the cell membrane. It is found in the cell junction. The protein resides in the gap junction. It localises to the endoplasmic reticulum. In terms of biological role, gap junction protein that acts as a regulator of bladder capacity. A gap junction consists of a cluster of closely packed pairs of transmembrane channels, the connexons, through which materials of low MW diffuse from one cell to a neighboring cell. May play a critical role in the physiology of hearing by participating in the recycling of potassium to the cochlear endolymph. Negative regulator of bladder functional capacity: acts by enhancing intercellular electrical and chemical transmission, thus sensitizing bladder muscles to cholinergic neural stimuli and causing them to contract. May play a role in cell growth inhibition through the regulation of NOV expression and localization. Plays an essential role in gap junction communication in the ventricles. The protein is Gap junction alpha-1 protein (GJA1) of Canis lupus familiaris (Dog).